A 532-amino-acid chain; its full sequence is Putative sodium-dependent excitatory amino acid transporter glt-3 (532 aa).

Residues 1-5 (MGMKK) lie on the Cytoplasmic side of the membrane. 3 helical membrane passes run 6-26 (DLLL…GFVI), 46-66 (FMQI…ISAL), and 83-103 (IYYM…VSSI). Topologically, residues 104–181 (HPGDPELIHE…SEVLHKQTLT (78 aa)) are extracellular. 2 N-linked (GlcNAc...) asparagine glycosylation sites follow: asparagine 164 and asparagine 169. 5 helical membrane-spanning segments follow: residues 182 to 202 (YTNE…GIIL), 222 to 242 (IIMR…LSLV), 264 to 284 (VTVI…LYFL), 352 to 372 (AVAV…MDLV), and 383 to 402 (IGSG…LTTV).

It belongs to the dicarboxylate/amino acid:cation symporter (DAACS) (TC 2.A.23) family.

The protein localises to the membrane. The chain is Putative sodium-dependent excitatory amino acid transporter glt-3 (glt-3) from Caenorhabditis elegans.